Here is a 115-residue protein sequence, read N- to C-terminus: Phosphoribosyl-AMP cyclohydrolase (115 aa).

Aspartate 80 lines the Mg(2+) pocket. Cysteine 81 lines the Zn(2+) pocket. Aspartate 82 and aspartate 84 together coordinate Mg(2+). Residues cysteine 97 and cysteine 104 each coordinate Zn(2+).

The protein belongs to the PRA-CH family. In terms of assembly, homodimer. Requires Mg(2+) as cofactor. It depends on Zn(2+) as a cofactor.

The protein resides in the cytoplasm. The enzyme catalyses 1-(5-phospho-beta-D-ribosyl)-5'-AMP + H2O = 1-(5-phospho-beta-D-ribosyl)-5-[(5-phospho-beta-D-ribosylamino)methylideneamino]imidazole-4-carboxamide. It functions in the pathway amino-acid biosynthesis; L-histidine biosynthesis; L-histidine from 5-phospho-alpha-D-ribose 1-diphosphate: step 3/9. In terms of biological role, catalyzes the hydrolysis of the adenine ring of phosphoribosyl-AMP. This chain is Phosphoribosyl-AMP cyclohydrolase, found in Mycobacterium leprae (strain Br4923).